Reading from the N-terminus, the 600-residue chain is MAPSSKSERNSGAGSGGGGPGGAGGKRAAGRRREHVLKQLERVKISGQLSPRLFRKLPPRVCVSLKNIVDEDFLYAGHIFLGFSKCGRYVLSYTSSSGDDDFSFYIYHLYWWEFNVHSKLKLVRQVRLFQDEEIYSDLYLTVCEWPSDASKVIVFGFNTRSANGMLMNMMMMSDENHRDIYVSTVAVPPPGRCAACQDASRAHPGDPNAQCLRHGFMLHTKYQVVYPFPTFQPAFQLKKDQVVLLNTSYSLVACAVSVHSAGDRSFCQILYDHSTCPLAPASPPEPQSPELPPALPSFCPEAAPARSSGSPEPSPAIAKAKEFVADIFRRAKEAKGGVPEEARPALCPGPSGSRCRAHSEPLALCGETAPRDSPPASEAPASEPGYVNYTKLYYVLESGEGTEPEDELEDDKISLPFVVTDLRGRNLRPMRERTAVQGQYLTVEQLTLDFEYVINEVIRHDATWGHQFCSFSDYDIVILEVCPETNQVLINIGLLLLAFPSPTEEGQLRPKTYHTSLKVAWDLNTGIFETVSVGDLTEVKGQTSGSVWSSYRKSCVDMVMKWLVPESSGRYVNRMTNEALHKGCSLKVLADSERYTWIVL.

Positions 1-30 (MAPSSKSERNSGAGSGGGGPGGAGGKRAAG) are disordered. Over residues 13 to 27 (AGSGGGGPGGAGGKR) the composition is skewed to gly residues. A Phosphoserine modification is found at Ser-50. Cys-193, Cys-196, Cys-211, and His-214 together coordinate Zn(2+). E7820 is bound by residues Phe-231 and 234-235 (AF). Over residues 280–295 (PASPPEPQSPELPPAL) the composition is skewed to pro residues. A disordered region spans residues 280 to 316 (PASPPEPQSPELPPALPSFCPEAAPARSSGSPEPSPA). Phosphoserine is present on residues Ser-310 and Ser-314.

As to quaternary structure, component of the DCX(DCAF15) complex, also named CLR4(DCAF15) complex, composed of DCAF15, DDB1, cullin-4 (CUL4A or CUL4B), DDA1 and RBX1.

It functions in the pathway protein modification; protein ubiquitination. Aryl sulfonamide anticancer drugs change the substrate specificity of DCAF15 by acting as a molecular glue that promotes binding between DCAF15 and weak affinity interactors, such as RBM39. Functionally, substrate-recognition component of the DCX(DCAF15) complex, a cullin-4-RING E3 ubiquitin-protein ligase complex that mediates ubiquitination and degradation of target proteins. The DCX(DCAF15) complex acts as a regulator of the natural killer (NK) cells effector functions, possibly by mediating ubiquitination and degradation of cohesin subunits SMC1A and SMC3. May play a role in the activation of antigen-presenting cells (APC) and their interaction with NK cells. In terms of biological role, binding of aryl sulfonamide anticancer drugs, such as indisulam (E7070) or E7820, change the substrate specificity of the DCX(DCAF15) complex, leading to promote ubiquitination and degradation of splicing factor RBM39. RBM39 degradation results in splicing defects and death in cancer cell lines. Aryl sulfonamide anticancer drugs change the substrate specificity of DCAF15 by acting as a molecular glue that promotes binding between DCAF15 and weak affinity interactor RBM39. Aryl sulfonamide anticancer drugs also promote ubiquitination and degradation of RBM23 and PRPF39. In Homo sapiens (Human), this protein is DDB1- and CUL4-associated factor 15.